The chain runs to 420 residues: MRKIIINGGKKLQGEVTVSGAKNSVVALIPAIILSDGVVTLDGVPAISDVDNLIEIIEVMGGSVKRDGETLEIDPRGVKDMPMPFGKINSLRASYYFYGSLLGRYGQAIVGLPGGCDLGPRPIDLHLKAFEAMGASIFYEGEAMRIATDAGQRIKGAHIYMDTVSVGATINTMLAAAKADGRTVIENAAREPEIIDVATLLNNMGARVRGAGTEVITIEGVESLHGTRHQVIPDRIEAGSYIAMAAAIGKGIKIKNVLYEHLESFICKLEAMGVRMTVEEDAIFVEEQGDLKPVDIKTSPYPGFATDLQQPMTPLLLKASGRGKIIDTIYEKRVNHVPELARMGADIQVLGGQIVYNGPTQLSGAPVKASDLRAGAALVTAGLMADGQTEITNIEFILRGYSNIIEKLSDLGADIRLIED.

22–23 contacts phosphoenolpyruvate; that stretch reads KN. Arginine 92 serves as a coordination point for UDP-N-acetyl-alpha-D-glucosamine. Catalysis depends on cysteine 116, which acts as the Proton donor. Cysteine 116 is modified (2-(S-cysteinyl)pyruvic acid O-phosphothioketal). UDP-N-acetyl-alpha-D-glucosamine-binding positions include 121–125, aspartate 307, and isoleucine 329; that span reads RPIDL.

This sequence belongs to the EPSP synthase family. MurA subfamily.

It is found in the cytoplasm. It catalyses the reaction phosphoenolpyruvate + UDP-N-acetyl-alpha-D-glucosamine = UDP-N-acetyl-3-O-(1-carboxyvinyl)-alpha-D-glucosamine + phosphate. It functions in the pathway cell wall biogenesis; peptidoglycan biosynthesis. Its function is as follows. Cell wall formation. Adds enolpyruvyl to UDP-N-acetylglucosamine. The polypeptide is UDP-N-acetylglucosamine 1-carboxyvinyltransferase 2 (Streptococcus thermophilus (strain ATCC BAA-250 / LMG 18311)).